The sequence spans 345 residues: Metal-dependent phosphohydrolase cns2 (345 aa).

The 102-residue stretch at 70–171 (RLEHSVGAFI…QLCADRLDYA (102 aa)) folds into the HD domain.

Interacts with cns1.

It localises to the lipid droplet. It functions in the pathway secondary metabolite biosynthesis. Metal-dependent phosphohydrolase; part of the gene cluster that mediates the biosynthesis of cordycepin (COR) and pentostatin (PTN), two adenosine analogs with related bioactivity profiles as both mimic adenosine and can inhibit some of the processes that are adenosine dependent. Within the pathway, cns2 catalyzes dephosphorylation of 3'-AMP to produce 2'-carbonyl-3'-deoxyadenosine (2'-C-3'-dA). The first step of cordycepin biosynthesis involves hydroxyl phosphorylation of the 3'-OH position on adenosine to produce adenosine-3'-monophosphate (3'-AMP), catalyzed by kinase activity of cns3. Next, 3'-AMP is dephosphorylated to 2'-carbonyl-3'-deoxyadenosine by cns2, which is finally converted to cordycepin (3'-deoxyadenosine) by the oxidoreductase cns1. This chain is Metal-dependent phosphohydrolase cns2, found in Cordyceps militaris (strain CM01) (Caterpillar fungus).